The primary structure comprises 197 residues: Xanthine phosphoribosyltransferase (197 aa).

Residues L20 and N27 each coordinate xanthine. 128 to 132 (ANGQA) is a 5-phospho-alpha-D-ribose 1-diphosphate binding site. Residue K156 participates in xanthine binding.

Belongs to the purine/pyrimidine phosphoribosyltransferase family. Xpt subfamily. As to quaternary structure, homodimer.

It localises to the cytoplasm. The catalysed reaction is XMP + diphosphate = xanthine + 5-phospho-alpha-D-ribose 1-diphosphate. Its pathway is purine metabolism; XMP biosynthesis via salvage pathway; XMP from xanthine: step 1/1. Functionally, converts the preformed base xanthine, a product of nucleic acid breakdown, to xanthosine 5'-monophosphate (XMP), so it can be reused for RNA or DNA synthesis. The polypeptide is Xanthine phosphoribosyltransferase (Bacillus cereus (strain ZK / E33L)).